Consider the following 1033-residue polypeptide: Isoleucine--tRNA ligase 2 (1033 aa).

Residues 47–57 (PTANGLPHVGH) carry the 'HIGH' region motif. The short motif at 590–594 (KMSKS) is the 'KMSKS' region element. Lys-593 is a binding site for ATP.

It belongs to the class-I aminoacyl-tRNA synthetase family. IleS type 2 subfamily. In terms of assembly, monomer. Zn(2+) serves as cofactor.

The protein localises to the cytoplasm. The catalysed reaction is tRNA(Ile) + L-isoleucine + ATP = L-isoleucyl-tRNA(Ile) + AMP + diphosphate. Functionally, catalyzes the attachment of isoleucine to tRNA(Ile). As IleRS can inadvertently accommodate and process structurally similar amino acids such as valine, to avoid such errors it has two additional distinct tRNA(Ile)-dependent editing activities. One activity is designated as 'pretransfer' editing and involves the hydrolysis of activated Val-AMP. The other activity is designated 'posttransfer' editing and involves deacylation of mischarged Val-tRNA(Ile). The protein is Isoleucine--tRNA ligase 2 of Bacillus anthracis.